Consider the following 561-residue polypeptide: Tetracenomycin A2 monooxygenase-dioxygenase (561 aa).

L15, E35, Q128, and M152 together coordinate FAD. Y231 (proton acceptor) is an active-site residue. Position 322 (D322) interacts with FAD.

The protein belongs to the PheA/TfdB FAD monooxygenase family. As to quaternary structure, monomer. May form oligomers up to homohexamers. It depends on FAD as a cofactor.

It carries out the reaction tetracenomycin A2 + 2 NADPH + 2 O2 + 2 H(+) = tetracenomycin C + 2 NADP(+) + H2O. It participates in antibiotic biosynthesis; tetracenomycin C biosynthesis. Involved in the biosynthesis of tetracenomycin C (TCM C). Catalyzes the triple hydroxylation of tetracenomycin A2 (TCM A2) at positions C-4, C-4a and C-12a to give tetracenomycin C (TCM C). Can use either NADH or NADPH as electron donors, but prefers NADPH under physiological conditions. This is Tetracenomycin A2 monooxygenase-dioxygenase from Streptomyces glaucescens.